The chain runs to 336 residues: MLPKLVITHRVHDEILQLLAPHCELMTNQTDSTLTREEILRRCRDAQAMMAFMPDRVDADFLQACPELRVVGCALKGFDNFDVDACTARGVWLTFVPDLLTVPTAELAIGLAVGLGRHLRAADAFVRSGEFQGWQPQFYGTGLDNATVGILGMGAIGLAMADRLQGWGATLQYHEAKALDTQTEQRLGLRQVACSELFASSDFILLALPLNADTQHLVNAELLALVRPGALLVNPCRGSVVDEAAVLAALERGQLGGYAADVFEMEDWARADRPRLIDPALLAHPNTLFTPHIGSAVRAVRLEIERCAAQNIIQVLAGARPINAANRLPKAEPAAC.

Residues 155-156 (AI), glutamate 175, 235-237 (PCR), and aspartate 261 contribute to the NAD(+) site. Residue arginine 237 is part of the active site. Glutamate 266 is an active-site residue. Catalysis depends on histidine 292, which acts as the Proton donor. Position 292–295 (292–295 (HIGS)) interacts with NAD(+).

Homodimer.

It carries out the reaction phosphonate + NAD(+) + H2O = phosphate + NADH + H(+). Its activity is regulated as follows. Inhibited by NaCl, NADH and sulfite. Its function is as follows. Catalyzes phosphite (phosphonate) oxidation. This chain is Phosphonate dehydrogenase (ptxD), found in Stutzerimonas stutzeri (Pseudomonas stutzeri).